Here is a 492-residue protein sequence, read N- to C-terminus: 2,3-bisphosphoglycerate-independent phosphoglycerate mutase (492 aa).

Residues D11 and S61 each coordinate Mn(2+). S61 functions as the Phosphoserine intermediate in the catalytic mechanism. Residues H118, 147-148 (RD), R178, R184, 248-251 (RNDR), and K320 each bind substrate. Mn(2+)-binding residues include D386, H390, D427, H428, and H445.

The protein belongs to the BPG-independent phosphoglycerate mutase family. In terms of assembly, monomer. It depends on Mn(2+) as a cofactor.

The enzyme catalyses (2R)-2-phosphoglycerate = (2R)-3-phosphoglycerate. Its pathway is carbohydrate degradation; glycolysis; pyruvate from D-glyceraldehyde 3-phosphate: step 3/5. Catalyzes the interconversion of 2-phosphoglycerate and 3-phosphoglycerate. This Campylobacter jejuni subsp. doylei (strain ATCC BAA-1458 / RM4099 / 269.97) protein is 2,3-bisphosphoglycerate-independent phosphoglycerate mutase.